The following is a 179-amino-acid chain: Large ribosomal subunit protein uL10 (179 aa).

A binds L7/L12 dimers region spans residues 137 to 179 (KEELYAMLVGRVKAPITGLVFALSGILRNLVYVLNAIKEKKSE).

In terms of assembly, part of the ribosomal stalk of the 50S ribosomal subunit. The N-terminus interacts with L11 and 23S rRNA to form the base of the stalk. The C-terminus forms an elongated spine to which 3 L12 dimers bind in a sequential fashion forming a heptameric L10(L12)2(L12)2(L12)2 complex.

Functionally, forms part of the ribosomal stalk, playing a central role in the interaction of the ribosome with GTP-bound translation factors (such as IF-2, EF-Tu, EF-G and RF3). The chain is Large ribosomal subunit protein uL10 (rplJ) from Thermotoga maritima (strain ATCC 43589 / DSM 3109 / JCM 10099 / NBRC 100826 / MSB8).